The following is a 2542-amino-acid chain: Highly reducing polyketide synthase (2542 aa).

The 429-residue stretch at 7–435 (PEPIAIVGMA…GANAHAILDA (429 aa)) folds into the Ketosynthase family 3 (KS3) domain. Active-site for beta-ketoacyl synthase activity residues include Cys-182, His-317, and His-357. One can recognise a Malonyl-CoA:ACP transacylase (MAT) domain in the interval 545 to 872 (FVFTGQGAQW…NLVGSLFLSG (328 aa)). An N-terminal hotdog fold region spans residues 927-1062 (HDLLGSRIPG…TTNETLRINS (136 aa)). The 298-residue stretch at 927-1224 (HDLLGSRIPG…FLSLETATKE (298 aa)) folds into the PKS/mFAS DH domain. His-959 serves as the catalytic Proton acceptor; for dehydratase activity. A C-terminal hotdog fold region spans residues 1072 to 1224 (NKDSYVRRWY…FLSLETATKE (153 aa)). Catalysis depends on Asp-1137, which acts as the Proton donor; for dehydratase activity. The interval 1275-1574 (LTQLAIRSVV…AGADIMLDDY (300 aa)) is methyltransferase (CMet) domain. A disordered region spans residues 1606-1634 (VNGTNGINSTNSVNVTNDTSGINDTNRMN). An Enoyl reductase (ER) domain is found at 1866-2186 (GKANSFYFES…QGDSVGSVVL (321 aa)). The Ketoreductase (KR) domain occupies 2209–2389 (ASYLLVGCLG…QAMSMALGMI (181 aa)).

Requires pantetheine 4'-phosphate as cofactor.

The protein operates within antifungal biosynthesis. Functionally, highly reducing polyketide synthase; part of the gene cluster that mediates the biosynthesis of the tetrahydropyranyl antifungal agent lanomycin that acts as an inhibitor of CYP51 and blocks the ergosterol biosynthesis. The biosynthesis probably begins with the formation of an hexaketide, followed by methionine mediated alkylation of C-2 and C-6, and methylation of the reduced C-3 oxygen, pyran forming reductive ring closure, oxygenation of C-4, beta-keto reduction, enoyl reduction and dehydration of the remaining oxygens, and finally, acylation with glycine to complete the biosynthesis. In Pyrenophora dematioidea (Helminthosporium dematioideum), this protein is Highly reducing polyketide synthase.